Reading from the N-terminus, the 438-residue chain is Adenosylhomocysteinase (438 aa).

The substrate site is built by threonine 64, aspartate 139, and glutamate 164. An NAD(+)-binding site is contributed by 165–167 (TTT). Substrate contacts are provided by lysine 194 and aspartate 198. Residues asparagine 199, 228–233 (GYGDVG), glutamate 251, asparagine 286, 307–309 (IGH), and asparagine 352 each bind NAD(+).

It belongs to the adenosylhomocysteinase family. The cofactor is NAD(+).

It localises to the cytoplasm. The catalysed reaction is S-adenosyl-L-homocysteine + H2O = L-homocysteine + adenosine. The protein operates within amino-acid biosynthesis; L-homocysteine biosynthesis; L-homocysteine from S-adenosyl-L-homocysteine: step 1/1. Its function is as follows. May play a key role in the regulation of the intracellular concentration of adenosylhomocysteine. The polypeptide is Adenosylhomocysteinase (Coxiella burnetii (strain RSA 493 / Nine Mile phase I)).